We begin with the raw amino-acid sequence, 115 residues long: Large ribosomal subunit protein bL19 (115 aa).

It belongs to the bacterial ribosomal protein bL19 family.

In terms of biological role, this protein is located at the 30S-50S ribosomal subunit interface and may play a role in the structure and function of the aminoacyl-tRNA binding site. This chain is Large ribosomal subunit protein bL19, found in Streptococcus equi subsp. zooepidemicus (strain H70).